An 831-amino-acid chain; its full sequence is Glucan 1,3-beta-glucosidase D (831 aa).

A compositionally biased stretch (basic and acidic residues) spans 1–21; that stretch reads MPSQSRSRDRYGRDSDRDRSR. Disordered regions lie at residues 1-246 and 261-288; these read MPSQ…RGQS and APDM…SDGS. Residues 1-300 are Cytoplasmic-facing; the sequence is MPSQSRSRDR…LTPFWKRKKW (300 aa). Acidic residues predominate over residues 32–41; it reads EDDDDDDDFD. 3 stretches are compositionally biased toward basic and acidic residues: residues 42–70, 78–94, and 151–177; these read DNPR…HDDY, EPRR…ERAR, and DAAR…HKST. Positions 178–195 are enriched in low complexity; it reads DSSNSSAGLLNANALAKL. 2 stretches are compositionally biased toward basic and acidic residues: residues 197 to 216 and 275 to 286; these read AQHE…EAKA and PPRERRWEKDSD. Residues 301 to 321 form a helical; Signal-anchor for type II membrane protein membrane-spanning segment; it reads WWIGAIVLVIVVIIIVVAVVV. Residues 322–831 are Extracellular-facing; sequence SNNKKSDSDS…PSFGNLPEYY (510 aa). The segment at 325 to 360 is disordered; that stretch reads KKSDSDSDSDSNSGSSDSWGGDKSSLNGLDHDSIPK. Positions 334-350 are enriched in low complexity; sequence DSNSGSSDSWGGDKSSL. Asn-379, Asn-396, and Asn-547 each carry an N-linked (GlcNAc...) asparagine glycan. The active-site Proton donor is the Glu-598. N-linked (GlcNAc...) asparagine glycosylation is found at Asn-611, Asn-637, Asn-670, and Asn-690. Glu-703 serves as the catalytic Nucleophile.

It belongs to the glycosyl hydrolase 5 (cellulase A) family.

Its subcellular location is the cell membrane. The enzyme catalyses Successive hydrolysis of beta-D-glucose units from the non-reducing ends of (1-&gt;3)-beta-D-glucans, releasing alpha-glucose.. Its function is as follows. Glucosidase involved in the degradation of cellulosic biomass. Active on lichenan. The protein is Glucan 1,3-beta-glucosidase D (exgD) of Emericella nidulans (strain FGSC A4 / ATCC 38163 / CBS 112.46 / NRRL 194 / M139) (Aspergillus nidulans).